The following is a 282-amino-acid chain: Rhomboid protease GlpG (282 aa).

Transmembrane regions (helical) follow at residues 96–116 (AGPLTLTILLLNIVVYLWMQF), 144–164 (GLLHFSLLHIIFNLMWWWYLG), 176–196 (LFVIMIVSAVFSGWGQSLFSG), 197–217 (SHFGGLSGVVYALIGYVWLTG), 225–242 (IGVPRGLMAFSLFWLIVG), and 247–269 (FGLSIANAAHFSGLIIGLLMALW). The active-site Nucleophile is the Ser203. His256 is a catalytic residue.

Belongs to the peptidase S54 family.

Its subcellular location is the cell inner membrane. It carries out the reaction Cleaves type-1 transmembrane domains using a catalytic dyad composed of serine and histidine that are contributed by different transmembrane domains.. Its function is as follows. Rhomboid-type serine protease that catalyzes intramembrane proteolysis. This chain is Rhomboid protease GlpG, found in Photorhabdus laumondii subsp. laumondii (strain DSM 15139 / CIP 105565 / TT01) (Photorhabdus luminescens subsp. laumondii).